We begin with the raw amino-acid sequence, 337 residues long: Phospholipase A1 1 (337 aa).

Positions methionine 1–alanine 21 are cleaved as a signal peptide. Positions alanine 22–arginine 35 are excised as a propeptide. Cysteine 41 and cysteine 124 form a disulfide bridge. Serine 174 serves as the catalytic Nucleophile. The active-site Charge relay system is aspartate 202. 2 disulfides stabilise this stretch: cysteine 213-cysteine 218 and cysteine 256-cysteine 261. Histidine 263 (charge relay system) is an active-site residue. 3 cysteine pairs are disulfide-bonded: cysteine 278–cysteine 305, cysteine 279–cysteine 330, and cysteine 298–cysteine 303.

The protein belongs to the AB hydrolase superfamily. Lipase family. As to expression, expressed by the venom gland.

The protein localises to the secreted. It carries out the reaction a 1,2-diacyl-sn-glycero-3-phosphocholine + H2O = a 2-acyl-sn-glycero-3-phosphocholine + a fatty acid + H(+). Catalyzes the hydrolysis of phosphatidylcholine with phospholipase A1 activity. May act as an allergen and induce hemolytic activity. The protein is Phospholipase A1 1 of Polistes dominula (European paper wasp).